The following is a 382-amino-acid chain: Rubredoxin-NAD(+) reductase (382 aa).

FAD-binding positions include 9 to 12 (TGLA), 33 to 34 (TA), Lys-42, Val-80, Glu-156, Asp-275, Val-287, and Lys-318.

Belongs to the FAD-dependent oxidoreductase family. Homodimer. The cofactor is FAD.

It is found in the cytoplasm. It carries out the reaction 2 reduced [rubredoxin] + NAD(+) + H(+) = 2 oxidized [rubredoxin] + NADH. Its pathway is hydrocarbon metabolism; alkane degradation. Functionally, involved in the hydrocarbon hydroxylating system, which transfers electrons from NADH to rubredoxin reductase and then through rubredoxin to alkane 1 monooxygenase. This chain is Rubredoxin-NAD(+) reductase (rubB), found in Alcanivorax borkumensis (strain ATCC 700651 / DSM 11573 / NCIMB 13689 / SK2).